The primary structure comprises 350 residues: Phosphotriesterase-related protein (350 aa).

Residues His-22, His-24, Glu-169, His-201, His-230, and Asp-298 each coordinate a divalent metal cation.

It belongs to the metallo-dependent hydrolases superfamily. Phosphotriesterase family. A divalent metal cation serves as cofactor.

This is Phosphotriesterase-related protein from Drosophila grimshawi (Hawaiian fruit fly).